We begin with the raw amino-acid sequence, 361 residues long: NAD(P)H-quinone oxidoreductase subunit 1, chloroplastic (361 aa).

Transmembrane regions (helical) follow at residues 28–48 (IWVL…VLVI), 99–119 (FTIG…VIPF), 128–148 (LSIG…GLLM), 249–269 (YSGI…LVSS), 270–290 (LFVT…LFVP), 301–321 (TIIC…ISIA), and 341–361 (FLLP…LLSL).

It belongs to the complex I subunit 1 family. In terms of assembly, NDH is composed of at least 16 different subunits, 5 of which are encoded in the nucleus.

Its subcellular location is the plastid. It is found in the chloroplast thylakoid membrane. The catalysed reaction is a plastoquinone + NADH + (n+1) H(+)(in) = a plastoquinol + NAD(+) + n H(+)(out). It carries out the reaction a plastoquinone + NADPH + (n+1) H(+)(in) = a plastoquinol + NADP(+) + n H(+)(out). Functionally, NDH shuttles electrons from NAD(P)H:plastoquinone, via FMN and iron-sulfur (Fe-S) centers, to quinones in the photosynthetic chain and possibly in a chloroplast respiratory chain. The immediate electron acceptor for the enzyme in this species is believed to be plastoquinone. Couples the redox reaction to proton translocation, and thus conserves the redox energy in a proton gradient. This is NAD(P)H-quinone oxidoreductase subunit 1, chloroplastic from Jasminum nudiflorum (Winter jasmine).